Consider the following 367-residue polypeptide: MEEFVNPCKIKVIGVGGGGSNAVNRMYEDGIEGVELYAINTDVQHLSTLKVPNKIQIGEKVTRGLGAGAKPEVGEEAALEDIDKIKEILRDTDMVFISAGLGGGTGTGAAPVIAKTAKEMGILTVAVATLPFRFEGPRKMEKALKGLEKLKESSDAYIVIHNDKIKELSNRTLTIKDAFKEVDSVLSKAVRGITSIVVTPAVINVDFADVRTTLEEGGLSIIGMGEGRGDEKADIAVEKAVTSPLLEGNTIEGARRLLVTIWTSEDIPYDIVDEVMERIHSKVHPEAEIIFGAVLEPQEQDFIRVAIVATDFPEEKFQVGEKEVKFKVIKKEEKEEPKEEPKPLSDTTYLEEEEIPAVIRRKNKRLL.

Residues 17–21, 104–106, E135, K139, and D183 each bind GTP; these read GGGSN and GTG.

Belongs to the FtsZ family. In terms of assembly, homodimer. Polymerizes to form a dynamic ring structure in a strictly GTP-dependent manner. Interacts directly with several other division proteins.

It localises to the cytoplasm. Essential cell division protein that forms a contractile ring structure (Z ring) at the future cell division site. The regulation of the ring assembly controls the timing and the location of cell division. One of the functions of the FtsZ ring is to recruit other cell division proteins to the septum to produce a new cell wall between the dividing cells. Binds GTP and shows GTPase activity. The protein is Cell division protein FtsZ of Aquifex aeolicus (strain VF5).